A 152-amino-acid chain; its full sequence is MISSFEVRKATIDDYFELRNLICDVTRCTETLSREQAEERFRYNTYHPYCLVDTENGRIVGYAGFYIIPHLGRKNDSRIEHVIISKEYRNRGLGRLLCKQIIEDAKNKFNCGRIDLTVESHIAKKLYSSLEFEKVNTEVMRNSFLDLTPKSD.

Residues 5 to 152 form the N-acetyltransferase domain; that stretch reads FEVRKATIDD…SFLDLTPKSD (148 aa). The Proton donor role is filled by tyrosine 127.

Belongs to the acetyltransferase family. In terms of assembly, homotetramer.

The protein resides in the cytoplasm. The catalysed reaction is an alkane-alpha,omega-diamine + acetyl-CoA = an N-acetylalkane-alpha,omega-diamine + CoA + H(+). Its pathway is amine and polyamine degradation; putrescine degradation; N-acetylputrescine from putrescine: step 1/1. Its function is as follows. Enzyme which catalyzes the acetylation of polyamines. Displays higher substrate specificity for spermine than for spermidine. May function to acetylate host-derived polyamines, thus alleviating the necessity for de novo synthesis of these molecules. This is Diamine acetyltransferase from Cryptosporidium parvum (strain Iowa II).